The following is a 259-amino-acid chain: MSEQRKPCKRGCIHTGVMLYGVLLQGAIPREYMISHQTDVRVNENRVNEQGCFLARKQMYDNSCGAASLLCAAKELGVDKIPQYKGSMSEMTRKSSLDLDNRCERDLYLITSGNYNPRIHKDNIADAGYSMPDKIVMATRLLGLNAYVVEESNIFSQVISFIYPDARDLLIGMGCNIVHQRDVLSSNQRVLEAVAVSFIGVPVGLHWVLCRPDGSYMDPAVGENYSCFSTMELGARRSNSNFIGYTKIGISIVITNEAL.

Active-site residues include C64, H206, and D218.

It localises to the secreted. The protein localises to the host cytoplasm. Its function is as follows. Virulence factor that eliminates N-myristoyl protein modifications in infected host cells. Acts as a cysteine protease that cleaves the peptide bond between N-myristoylated Gly-2 and Asn-3 of human ARF1, leading to the elimination of the myristoyl group and alteration of protein trafficking in host cell. Could also cleave an array of N-myristoylated host proteins involved in cellular growth, signal transduction, autophagasome maturation and organelle function. In Shigella flexneri, this protein is Cysteine protease IpaJ (ipaJ).